Reading from the N-terminus, the 668-residue chain is Macrolide export ATP-binding/permease protein MacB 1/2 (668 aa).

The ABC transporter domain maps to 9–247 (IRLRGVGREY…PGPGPAQAPQ (239 aa)). 45-52 (GASGSGKS) contacts ATP. The interval 230-257 (RTGAPAADPGPGPAQAPQPAPQPAPVQA) is disordered. The segment covering 237–255 (DPGPGPAQAPQPAPQPAPV) has biased composition (pro residues). 4 helical membrane-spanning segments follow: residues 294-314 (FLTM…VALG), 541-561 (LALL…IGVM), 598-618 (LVCV…GLAF), and 634-654 (MLAA…LPAV).

It belongs to the ABC transporter superfamily. Macrolide exporter (TC 3.A.1.122) family. Homodimer.

The protein localises to the cell inner membrane. Non-canonical ABC transporter that contains transmembrane domains (TMD), which form a pore in the inner membrane, and an ATP-binding domain (NBD), which is responsible for energy generation. Confers resistance against macrolides. The sequence is that of Macrolide export ATP-binding/permease protein MacB 1/2 from Paracoccus denitrificans (strain Pd 1222).